A 283-amino-acid chain; its full sequence is Putative transposase InsK for insertion sequence element IS150 (283 aa).

Positions 117–279 (KATRPNEKWV…TPIEYRNQTY (163 aa)) constitute an Integrase catalytic domain.

The protein belongs to the transposase IS3/IS150/IS904 family.

Its function is as follows. Involved in the transposition of the insertion sequence IS150. The polypeptide is Putative transposase InsK for insertion sequence element IS150 (insK) (Escherichia coli (strain K12)).